Consider the following 211-residue polypeptide: Nucleoside triphosphate pyrophosphatase (211 aa).

D75 serves as the catalytic Proton acceptor.

The protein belongs to the Maf family. The cofactor is a divalent metal cation.

Its subcellular location is the cytoplasm. It carries out the reaction a ribonucleoside 5'-triphosphate + H2O = a ribonucleoside 5'-phosphate + diphosphate + H(+). The enzyme catalyses a 2'-deoxyribonucleoside 5'-triphosphate + H2O = a 2'-deoxyribonucleoside 5'-phosphate + diphosphate + H(+). Nucleoside triphosphate pyrophosphatase. May have a dual role in cell division arrest and in preventing the incorporation of modified nucleotides into cellular nucleic acids. This chain is Nucleoside triphosphate pyrophosphatase, found in Prochlorococcus marinus (strain NATL1A).